The primary structure comprises 1108 residues: Receptor-type guanylate cyclase gcy-20 (1108 aa).

Residues 1–15 (MRILLLLLQNILVFC) form the signal peptide. The Extracellular segment spans residues 16–474 (QFLQTIKVGL…ECPADFVKEY (459 aa)). N-linked (GlcNAc...) asparagine glycans are attached at residues N66, N131, N319, N341, N366, and N380. The chain crosses the membrane as a helical span at residues 475-495 (LVYTIIAAFIVILALLAGCAG). Residues 483–803 (FIVILALLAG…IEQVRSHLNG (321 aa)) form the Protein kinase domain. ATP-binding positions include 489-497 (LLAGCAGLL) and K571. The Cytoplasmic portion of the chain corresponds to 496–1108 (LLYTMHMKRK…QAGDNNSETV (613 aa)). The Guanylate cyclase domain maps to 876 to 1006 (TIFFSDVVQF…DAVNTASRME (131 aa)). The interval 1083-1108 (LEKNAEGSETSSLSVDQAGDNNSETV) is disordered. A compositionally biased stretch (polar residues) spans 1089–1108 (GSETSSLSVDQAGDNNSETV).

Belongs to the adenylyl cyclase class-4/guanylyl cyclase family. Expressed asymmetrically in ASE left (ASEL) sensory neuron. Expressed in excretory gland and canal cell.

The protein resides in the cell membrane. The enzyme catalyses GTP = 3',5'-cyclic GMP + diphosphate. Its function is as follows. Guanylate cyclase involved in the production of the second messenger cGMP. The sequence is that of Receptor-type guanylate cyclase gcy-20 from Caenorhabditis elegans.